A 642-amino-acid polypeptide reads, in one-letter code: uncharacterized protein (642 aa).

The Cytoplasmic segment spans residues 1-15; sequence MVHITLGQAIWVSVK. Residues 16–36 form a helical membrane-spanning segment; sequence PIIKIYLIIGVGFLMAKMGIL. The Extracellular segment spans residues 37–42; sequence TVEATR. The helical transmembrane segment at 43-63 threads the bilayer; that stretch reads IISDIVLTVLLPSLSFNKIVA. The Cytoplasmic portion of the chain corresponds to 64–73; sequence NIEDKDIKSV. The helical transmembrane segment at 74–94 threads the bilayer; that stretch reads GIICLSALLIFGSGFFFAYVV. Residues 95 to 104 are Extracellular-facing; the sequence is RLFLPVPKQW. A helical transmembrane segment spans residues 105 to 125; it reads YGGILAGGMFPNISDLPIAYL. Residues 126–142 are Cytoplasmic-facing; sequence QSMDQGLVFSEEEGNKG. Residues 143–163 form a helical membrane-spanning segment; sequence VANVIIFLTMFLICIFNLGGF. At 164-460 the chain is on the extracellular side; the sequence is RLIESDFEYN…FLKNCLRPCS (297 aa). Disordered regions lie at residues 183-206 and 227-324; these read ETTK…RFFS and GTKG…SQPR. Polar residues-rich tracts occupy residues 240–260 and 272–312; these read RRST…NSKI and IACT…SSID. A helical transmembrane segment spans residues 461–481; that stretch reads MAVIIALTVAFIPWVKALFVT. Over 482 to 499 the chain is Cytoplasmic; that stretch reads TANTPHISQAPDNAPPLS. The helical transmembrane segment at 500-520 threads the bilayer; that stretch reads FFMDFTGYVGAACVPFGLILL. Topologically, residues 521 to 538 are extracellular; it reads GATLGRLKIGNLYPGFWK. Residues 539–559 traverse the membrane as a helical segment; sequence AAVTLVILRQCVMPIFGVLWC. At 560–574 the chain is on the cytoplasmic side; that stretch reads DRLVKAGWVNWQDDR. A helical membrane pass occupies residues 575 to 595; that stretch reads MLLFVIAISWNLPTMTTLIYF. Residues 596 to 614 lie on the Extracellular side of the membrane; sequence TASFTPPETTAPIQMECVS. Residues 615–635 traverse the membrane as a helical segment; sequence FFLMLQYPLMVVSLPFLVSYF. At 636–642 the chain is on the cytoplasmic side; it reads LKVQMNL.

This sequence belongs to the auxin efflux carrier (TC 2.A.69) family.

The protein localises to the membrane. This is an uncharacterized protein from Saccharomyces cerevisiae (strain ATCC 204508 / S288c) (Baker's yeast).